A 305-amino-acid chain; its full sequence is GMP synthase [glutamine-hydrolyzing] subunit B (305 aa).

Residues 2-184 (VNTERFIQQA…LGLPREIQHR (183 aa)) form the GMPS ATP-PPase domain. 29–35 (SGGVDSS) provides a ligand contact to ATP.

As to quaternary structure, heterodimer composed of a glutamine amidotransferase subunit (A) and a GMP-binding subunit (B).

The catalysed reaction is XMP + L-glutamine + ATP + H2O = GMP + L-glutamate + AMP + diphosphate + 2 H(+). It functions in the pathway purine metabolism; GMP biosynthesis; GMP from XMP (L-Gln route): step 1/1. In terms of biological role, catalyzes the synthesis of GMP from XMP. The chain is GMP synthase [glutamine-hydrolyzing] subunit B from Methanosphaerula palustris (strain ATCC BAA-1556 / DSM 19958 / E1-9c).